Here is a 292-residue protein sequence, read N- to C-terminus: 4-hydroxy-tetrahydrodipicolinate synthase (292 aa).

T45 contributes to the pyruvate binding site. Catalysis depends on Y133, which acts as the Proton donor/acceptor. The active-site Schiff-base intermediate with substrate is the K161. Residue I203 coordinates pyruvate.

Belongs to the DapA family. In terms of assembly, homodimer.

The protein localises to the cytoplasm. It carries out the reaction L-aspartate 4-semialdehyde + pyruvate = (2S,4S)-4-hydroxy-2,3,4,5-tetrahydrodipicolinate + H2O + H(+). The protein operates within amino-acid biosynthesis; L-lysine biosynthesis via DAP pathway; (S)-tetrahydrodipicolinate from L-aspartate: step 3/4. Catalyzes the condensation of (S)-aspartate-beta-semialdehyde [(S)-ASA] and pyruvate to 4-hydroxy-tetrahydrodipicolinate (HTPA). This Pseudomonas savastanoi pv. phaseolicola (strain 1448A / Race 6) (Pseudomonas syringae pv. phaseolicola (strain 1448A / Race 6)) protein is 4-hydroxy-tetrahydrodipicolinate synthase.